Consider the following 734-residue polypeptide: Photosystem I P700 chlorophyll a apoprotein A2 (734 aa).

A run of 8 helical transmembrane segments spans residues 46–69 (IFASHFGQLAIIFLWTSGNLFHVA), 135–158 (LYTGALFLLFLSAISLIAGWLHLQ), 175–199 (LNHHLSGLFGVSSLAWTGHLVHVAI), 273–291 (IAHHHLAIAFLFLVAGHMY), 330–353 (IHFQLGLALASLGVITSLVAQHMY), 369–395 (AALYTHHQYIAGFIMTGAFAHGAIFFI), 417–439 (AIKSHLSWVSLFLGFHTLGLYVH), and 517–535 (FLVHHAIALGLHTTTLILV). 2 residues coordinate [4Fe-4S] cluster: C559 and C568. 2 helical membrane-spanning segments follow: residues 575–596 (AFYLAVFWMLNTIGWVTFYWHW) and 643–665 (LSVWAWMFLFGHLVWATGFMFLI). Positions 654, 662, and 670 each coordinate chlorophyll a. Residue W671 coordinates phylloquinone. The chain crosses the membrane as a helical span at residues 707–727 (LVGLAHFSVGYIFTYAAFLIA).

It belongs to the PsaA/PsaB family. The PsaA/B heterodimer binds the P700 chlorophyll special pair and subsequent electron acceptors. PSI consists of a core antenna complex that captures photons, and an electron transfer chain that converts photonic excitation into a charge separation. The eukaryotic PSI reaction center is composed of at least 11 subunits. Requires P700 is a chlorophyll a/chlorophyll a' dimer, A0 is one or more chlorophyll a, A1 is one or both phylloquinones and FX is a shared 4Fe-4S iron-sulfur center. as cofactor.

It is found in the plastid. Its subcellular location is the chloroplast thylakoid membrane. The enzyme catalyses reduced [plastocyanin] + hnu + oxidized [2Fe-2S]-[ferredoxin] = oxidized [plastocyanin] + reduced [2Fe-2S]-[ferredoxin]. Functionally, psaA and PsaB bind P700, the primary electron donor of photosystem I (PSI), as well as the electron acceptors A0, A1 and FX. PSI is a plastocyanin-ferredoxin oxidoreductase, converting photonic excitation into a charge separation, which transfers an electron from the donor P700 chlorophyll pair to the spectroscopically characterized acceptors A0, A1, FX, FA and FB in turn. Oxidized P700 is reduced on the lumenal side of the thylakoid membrane by plastocyanin. The chain is Photosystem I P700 chlorophyll a apoprotein A2 from Drimys granadensis.